The chain runs to 468 residues: Cysteine--tRNA ligase (468 aa).

Cys-36 lines the Zn(2+) pocket. The 'HIGH' region signature appears at Pro-38 to Asn-48. Zn(2+) is bound by residues Cys-216, His-241, and Glu-245. A 'KMSKS' region motif is present at residues Lys-274–Ser-278. Lys-277 contributes to the ATP binding site.

Belongs to the class-I aminoacyl-tRNA synthetase family. Monomer. Zn(2+) serves as cofactor.

It is found in the cytoplasm. It catalyses the reaction tRNA(Cys) + L-cysteine + ATP = L-cysteinyl-tRNA(Cys) + AMP + diphosphate. In Parvibaculum lavamentivorans (strain DS-1 / DSM 13023 / NCIMB 13966), this protein is Cysteine--tRNA ligase.